Here is a 187-residue protein sequence, read N- to C-terminus: Ribosome hibernation promotion factor (187 aa).

This sequence belongs to the HPF/YfiA ribosome-associated protein family. Long HPF subfamily. Interacts with 100S ribosomes.

Its subcellular location is the cytoplasm. Functionally, involved in 100S ribosome formation from 70S ribosomes; 100S ribosomes are probably translationally inactive. Ribosome hibernation may be used by the cell to decrease overall energy consumption under nutrient-limiting conditions. Unlike E.coli, 100S ribosomes are present from mid-exponential growth, peak during the transition from log to stationary phase and then decrease. In Listeria monocytogenes serotype 1/2a (strain 10403S), this protein is Ribosome hibernation promotion factor.